The following is a 416-amino-acid chain: Gamma-glutamyl phosphate reductase (416 aa).

Belongs to the gamma-glutamyl phosphate reductase family.

The protein resides in the cytoplasm. The enzyme catalyses L-glutamate 5-semialdehyde + phosphate + NADP(+) = L-glutamyl 5-phosphate + NADPH + H(+). Its pathway is amino-acid biosynthesis; L-proline biosynthesis; L-glutamate 5-semialdehyde from L-glutamate: step 2/2. In terms of biological role, catalyzes the NADPH-dependent reduction of L-glutamate 5-phosphate into L-glutamate 5-semialdehyde and phosphate. The product spontaneously undergoes cyclization to form 1-pyrroline-5-carboxylate. This Streptococcus pyogenes serotype M1 protein is Gamma-glutamyl phosphate reductase.